The primary structure comprises 259 residues: Tubulin-specific chaperone C (259 aa).

The C-CAP/cofactor C-like domain maps to 112 to 241 (PEVYFENDTL…DEHPILDFTW (130 aa)).

The protein belongs to the TBCC family.

Its subcellular location is the cytoplasm. It localises to the cytoskeleton. Functionally, tubulin-folding protein; involved in the final step of the tubulin folding pathway. In Schizosaccharomyces pombe (strain 972 / ATCC 24843) (Fission yeast), this protein is Tubulin-specific chaperone C (cin2).